Here is a 449-residue protein sequence, read N- to C-terminus: Putative BTB/POZ domain-containing protein L742 (449 aa).

The region spanning 79–148 (EDGYVYINIG…LTMSNQELSG (70 aa)) is the BTB domain.

This sequence belongs to the mimivirus BTB/WD family.

The polypeptide is Putative BTB/POZ domain-containing protein L742 (Acanthamoeba polyphaga mimivirus (APMV)).